The sequence spans 519 residues: MFEISLSDPVELRDADDAALLAAIEDCARAEVAAGARRLSAIAELTSRRTGNDQRADWACDGWDCAAAEVAAALTVSHRKASGQMHLSLTLNRLPQVAALFLAGQLSARLVSIIAWRTYLVRDPEALSLLDAALAKHATAWGPLSAPKLEKAIDSWIDRYDPAALRRTRISARSRDLCIGDPDEDAGTAALWGRLFATDAAMLDKRLTQLAHGVCDDDPRTIAQRRADALGALAAGADRLTCGCGNSDCPSSAGNHRQATGVVIHVVADAAALGAAPDPRLSGPEPALAPEAPATPAVKPPAALISGGGVVPAPLLAELIRGGAALSRMRHPGDLRSEPHYRPSAKLAEFVRIRDMTCRFPGCDQPTEFCDIDHTLPYPLGPTHPSNLKCLCRKHHLLKTFWTGWRDVQLPDGTIIWTAPNGHTYTTHPDSRIFLPSWHTTTAALPPAPSPPAIGPTHTLLMPRRRRTRAAELAHRIKRERAHVTQRNKPPPSGGDTAVAEGFEPPDGVSRLSLSRRVH.

Basic residues predominate over residues 477-486 (IKRERAHVTQ). Residues 477–519 (IKRERAHVTQRNKPPPSGGDTAVAEGFEPPDGVSRLSLSRRVH) are disordered.

This is an uncharacterized protein from Mycobacterium tuberculosis (strain ATCC 25618 / H37Rv).